The chain runs to 506 residues: MSDNIGQINFTIPGIQSLDENDTYLKINHKKTIKICAYAITAIALFFIGGVFFKNQAKINALDAIDEAVLMNKEIAHLREILNKYKATINEDDEFVYQAYDNKNGDSENQLLLMLHKLLKNNANKVNTFDVNNESNKNIDPTYIFRQKLESMQDNIKYASKFFKYMKENNKKYENMDEQLQRFENFKIRYMKTQKHNEMVGKNGLTYVQKVNQYSDFSKEEFDNYFKKLLSVPMDLKSKYIVPLKKHLANTNLISVDNKSKDFPDSRDYRSKFNFLPPKDQGNCGSCWAFAAIGNFEYLYVHTRHEMPISFSEQQMVDCSTENYGCDGGNPFYAFLYMINNGVCLGDEYPYKGHEDFFCLNYRCSLLGRVHFIGDVKPNELIMALNYVGPVTIAVGASEDFVLYSGGVFDGECNPELNHSVLLVGYGQVKKSLAFEDSHSNVDSNLIKKYKENIKGDDDDDIIYYWIVRNSWGPNWGEGGYIRIKRNKAGDDGFCGVGSDVFFPIY.

Topologically, residues 1-32 are cytoplasmic; it reads MSDNIGQINFTIPGIQSLDENDTYLKINHKKT. The propeptide at 1-262 is activation peptide; the sequence is MSDNIGQINF…LISVDNKSKD (262 aa). A helical; Signal-anchor for type II membrane protein membrane pass occupies residues 33–53; that stretch reads IKICAYAITAIALFFIGGVFF. Residues 54–506 lie on the Lumenal side of the membrane; that stretch reads KNQAKINALD…VGSDVFFPIY (453 aa). Asn133 and Asn258 each carry an N-linked (GlcNAc...) asparagine glycan. Cystine bridges form between Cys284–Cys326, Cys319–Cys359, Cys344–Cys364, and Cys413–Cys495. The active site involves Cys287. An N-linked (GlcNAc...) asparagine glycan is attached at Asn418. Catalysis depends on residues His419 and Asn470.

This sequence belongs to the peptidase C1 family.

It localises to the membrane. In terms of biological role, cysteine protease. This Plasmodium vinckei protein is Vinckepain-1.